The chain runs to 332 residues: Geranylgeranyl diphosphate synthase (332 aa).

Isopentenyl diphosphate-binding residues include lysine 45, arginine 48, and histidine 77. Positions 84 and 88 each coordinate Mg(2+). Arginine 93 is a binding site for an all-trans-polyprenyl diphosphate. Arginine 94 lines the isopentenyl diphosphate pocket. Residues lysine 177, threonine 178, glutamine 215, lysine 232, and lysine 242 each contribute to the an all-trans-polyprenyl diphosphate site.

The protein belongs to the FPP/GGPP synthase family. Mg(2+) is required as a cofactor.

It catalyses the reaction isopentenyl diphosphate + (2E,6E)-farnesyl diphosphate = (2E,6E,10E)-geranylgeranyl diphosphate + diphosphate. Its pathway is isoprenoid biosynthesis; geranylgeranyl diphosphate biosynthesis; geranylgeranyl diphosphate from farnesyl diphosphate and isopentenyl diphosphate: step 1/1. Functionally, catalyzes the condensation of isopentenyl pyrophosphate with the allylic pyrophosphates to yield geranylgeranyl diphosphate (GGPP) which is a precursor of the ether-linked lipids. The chain is Geranylgeranyl diphosphate synthase (gds) from Saccharolobus solfataricus (strain ATCC 35092 / DSM 1617 / JCM 11322 / P2) (Sulfolobus solfataricus).